The chain runs to 367 residues: MESLFPAPYWEVLYGSHFQGNLSLLNETVPHHLLLNASHSAFLPLGLKVTIVGLYLAVCIGGLLGNCLVMYVILRHTKMKTATNIYIFNLALADTLVLLTLPFQGTDILLGFWPFGNALCKTVIAIDYYNMFTSTFTLTAMSVDRYVAICHPIRALDVRTSSKAQAVNVAIWALASVVGVPVAIMGSAQVEDEEIECLVEIPAPQDYWGPVFAICIFLFSFIIPVLIISVCYSLMIRRLRGVRLLSGSREKDRNLRRITRLVLVVVAVFVGCWTPVQVFVLVQGLGVQPGSETAVAILRFCTALGYVNSCLNPILYAFLDENFKACFRKFCCASSLHREMQVSDRVRSIAKDVGLGCKTSETVPRPA.

Over 1-45 the chain is Extracellular; sequence MESLFPAPYWEVLYGSHFQGNLSLLNETVPHHLLLNASHSAFLPL. Residues asparagine 21, asparagine 26, and asparagine 36 are each glycosylated (N-linked (GlcNAc...) asparagine). Residues 46-71 form a helical membrane-spanning segment; the sequence is GLKVTIVGLYLAVCIGGLLGNCLVMY. Over 72-84 the chain is Cytoplasmic; sequence VILRHTKMKTATN. Residues 85–106 form a helical membrane-spanning segment; the sequence is IYIFNLALADTLVLLTLPFQGT. Topologically, residues 107 to 121 are extracellular; it reads DILLGFWPFGNALCK. A disulfide bridge links cysteine 120 with cysteine 197. Residues 122 to 143 form a helical membrane-spanning segment; that stretch reads TVIAIDYYNMFTSTFTLTAMSV. The Cytoplasmic segment spans residues 144 to 162; it reads DRYVAICHPIRALDVRTSS. Residues 163-185 traverse the membrane as a helical segment; it reads KAQAVNVAIWALASVVGVPVAIM. At 186 to 208 the chain is on the extracellular side; it reads GSAQVEDEEIECLVEIPAPQDYW. A helical membrane pass occupies residues 209 to 233; it reads GPVFAICIFLFSFIIPVLIISVCYS. The Cytoplasmic portion of the chain corresponds to 234–261; it reads LMIRRLRGVRLLSGSREKDRNLRRITRL. A helical transmembrane segment spans residues 262 to 282; it reads VLVVVAVFVGCWTPVQVFVLV. Residues 283-297 are Extracellular-facing; that stretch reads QGLGVQPGSETAVAI. Residues 298-319 form a helical membrane-spanning segment; sequence LRFCTALGYVNSCLNPILYAFL. The Cytoplasmic portion of the chain corresponds to 320–367; the sequence is DENFKACFRKFCCASSLHREMQVSDRVRSIAKDVGLGCKTSETVPRPA. The S-palmitoyl cysteine moiety is linked to residue cysteine 331.

Belongs to the G-protein coupled receptor 1 family. Post-translationally, phosphorylation at Ser-360 requires GRK3. In terms of tissue distribution, highly expressed in several brain areas, the intestine, liver and spleen. Detected in sympathetic stellate ganglion neurons.

The protein localises to the cell membrane. Its subcellular location is the cytoplasmic vesicle. G-protein coupled opioid receptor that functions as a receptor for the endogenous neuropeptide nociceptin. Ligand binding causes a conformation change that triggers signaling via guanine nucleotide-binding proteins (G proteins) and modulates the activity of down-stream effectors. Signaling via G proteins mediates inhibition of adenylate cyclase activity and calcium channel activity. Arrestins modulate signaling via G proteins and mediate the activation of alternative signaling pathways that lead to the activation of MAP kinases. Plays a role in modulating nociception and the perception of pain. Plays a role in the regulation of locomotor activity by the neuropeptide nociceptin. The protein is Nociceptin receptor (Oprl1) of Rattus norvegicus (Rat).